A 121-amino-acid polypeptide reads, in one-letter code: MTELSITGQQVMPPPACTPPEPFRITTNAPHQMNDASLTPGRRKLQKWLGRVLRIVITDGRVLVGFFNCTDRDANIVLSMCAEYLVEGQEPRLLGNVMVPGQHIVSLSIDEPDPQSSLLVQ.

The region spanning 40–113 (PGRRKLQKWL…IVSLSIDEPD (74 aa)) is the Sm domain.

It belongs to the snRNP Sm proteins family. As to quaternary structure, component of the N-terminal acetyltransferase C (NatC) complex, which is composed of Naa35, Sbat/Naa38 and Naa30A. Interacts with Smn and Hez; along with Hez and Vlet, may form an accessory subcomplex involved in SMN complex function.

Its subcellular location is the cytoplasm. The protein localises to the nucleus. Its function is as follows. Auxiliary component of the N-terminal acetyltransferase C (NatC) complex which catalyzes acetylation of N-terminal methionine residues. May have an accessory function in the survival motor neuron (SMN) complex. The protein is N-alpha-acetyltransferase 38, NatC auxiliary subunit of Drosophila melanogaster (Fruit fly).